A 54-amino-acid chain; its full sequence is Protein YojO (54 aa).

It belongs to the YojO family.

This chain is Protein YojO (yojO), found in Escherichia coli (strain K12).